The sequence spans 254 residues: NH(3)-dependent NAD(+) synthetase (254 aa).

29–36 contributes to the ATP binding site; the sequence is GLSGGIDS. Mg(2+) is bound at residue aspartate 35. Arginine 115 contacts deamido-NAD(+). Threonine 135 lines the ATP pocket. Residue glutamate 140 coordinates Mg(2+). Deamido-NAD(+)-binding residues include lysine 148 and aspartate 155. Positions 164 and 186 each coordinate ATP. 245–246 is a binding site for deamido-NAD(+); sequence HK.

Belongs to the NAD synthetase family. As to quaternary structure, homodimer.

It catalyses the reaction deamido-NAD(+) + NH4(+) + ATP = AMP + diphosphate + NAD(+) + H(+). Its pathway is cofactor biosynthesis; NAD(+) biosynthesis; NAD(+) from deamido-NAD(+) (ammonia route): step 1/1. Catalyzes the ATP-dependent amidation of deamido-NAD to form NAD. Uses ammonia as a nitrogen source. This Methanococcus aeolicus (strain ATCC BAA-1280 / DSM 17508 / OCM 812 / Nankai-3) protein is NH(3)-dependent NAD(+) synthetase.